The sequence spans 699 residues: Elongation factor G (699 aa).

In terms of domain architecture, tr-type G spans 8 to 286 (EKLRNIGIVA…AVIVTYPLPI (279 aa)). Residues 17–24 (AHIDAGKT), 84–88 (DTPGH), and 138–141 (NKMD) contribute to the GTP site.

It belongs to the TRAFAC class translation factor GTPase superfamily. Classic translation factor GTPase family. EF-G/EF-2 subfamily.

It localises to the cytoplasm. Its function is as follows. Catalyzes the GTP-dependent ribosomal translocation step during translation elongation. During this step, the ribosome changes from the pre-translocational (PRE) to the post-translocational (POST) state as the newly formed A-site-bound peptidyl-tRNA and P-site-bound deacylated tRNA move to the P and E sites, respectively. Catalyzes the coordinated movement of the two tRNA molecules, the mRNA and conformational changes in the ribosome. The polypeptide is Elongation factor G (fusA) (Aquifex pyrophilus).